Consider the following 224-residue polypeptide: Deoxyguanosine kinase (224 aa).

G8–S16 is an ATP binding site. Residues E32, Y44, and Q55 each coordinate substrate. The Proton acceptor role is filled by D78. Residues R79, D84, and E149 each contribute to the substrate site.

This sequence belongs to the DCK/DGK family. In terms of assembly, heterodimer of a deoxyadenosine (DAK) and a deoxyguanosine kinase (DGK).

It carries out the reaction 2'-deoxyguanosine + ATP = dGMP + ADP + H(+). Its function is as follows. DGK/DAK plays an essential role in generating the deoxyribonucleotide precursors, dGTP and dATP, for DNA metabolism. The sequence is that of Deoxyguanosine kinase from Lactobacillus johnsonii (strain CNCM I-12250 / La1 / NCC 533).